Reading from the N-terminus, the 150-residue chain is UPF0756 membrane protein Asuc_1151 (150 aa).

The next 4 membrane-spanning stretches (helical) occupy residues 1 to 21 (MSLHFNSIGFLLVVLALLGVL), 52 to 72 (YGLNIGVIILTIGVLSPIVAG), 82 to 102 (LLHWKMFLSLVVGMLVAWLAG), and 123 to 143 (ILGVGLLGGIPVGPLIAAGIL).

The protein belongs to the UPF0756 family.

The protein localises to the cell membrane. In Actinobacillus succinogenes (strain ATCC 55618 / DSM 22257 / CCUG 43843 / 130Z), this protein is UPF0756 membrane protein Asuc_1151.